Here is a 1516-residue protein sequence, read N- to C-terminus: EF-hand calcium-binding domain-containing protein 6 (1516 aa).

Positions 1-23 (MKRNGTRLNFAKANSTKSGSTRA) are disordered. A compositionally biased stretch (polar residues) spans 12-21 (KANSTKSGST). 5 consecutive EF-hand domains span residues 96 to 131 (SRRDDIKKVFQILDRNHNQMVTKGDLKRVITAFLIP), 197 to 232 (RNMRSIRKVFQVMDVNNTGLVQPQELRRVLETFCLR), 321 to 356 (KSYEKIEKALSAGDPSKGGYISLNYLKVVLDTFIYR), 444 to 462 (SGHITWEELRHILNCMVAK), and 528 to 563 (RNLQAFYSMLQSYDLRDTGTIGKNNFRKVMRVFCPY). Positions 109, 111, 113, 115, 120, 210, 212, 214, and 221 each coordinate Ca(2+). The tract at residues 618–638 (EEPGQQDERTQPSGEKTSEIN) is disordered. The span at 628–638 (QPSGEKTSEIN) shows a compositional bias: polar residues. EF-hand domains lie at 674–690 (KINQEEFRKVLERSGMP), 763–798 (ESFRDVYSAFFRIDLDRDGIISMHDFHRLLQYLQLN), 905–940 (LTPREFEKLWQNYDTEGRGYITYQEFLHRLGIRYSP), 1086–1121 (SSQPALVEAFSALDKEDTGFVKAMEFGDVLRSVCQK), 1193–1228 (SHYHTIVQEFENFDTLKSNTVSRDEFRSICTRHIQI), and 1229–1264 (LTDEQFDRLWSELPVNAKGRLKYQDFLSKLSIERVP). Asp-776, Asp-778, Asp-780, and Asp-787 together coordinate Ca(2+). The residue at position 906 (Thr-906) is a Phosphothreonine. Residues 1263 to 1318 (VPSPPMAAGDSGESTMAQRGSSAPEFSQGTRSNLYSPPRDSRVGLKSRSHPCTPVG) form a disordered region. Position 1265 is a phosphoserine (Ser-1265). Residues 1274-1297 (GESTMAQRGSSAPEFSQGTRSNLY) are compositionally biased toward polar residues. Ser-1311 is subject to Phosphoserine. A phosphothreonine mark is found at Thr-1315 and Thr-1319. Positions 1318–1516 (GTPPLQNCEP…YNDFLRAFLQ (199 aa)) are interaction with PARK7. 4 EF-hand domains span residues 1348 to 1373 (KEKDTDKQGTISAAEFLALVEKFKLD), 1374 to 1409 (ISREESQQLIVKYDLKNNGKFAYCDFIQSCVLLLKA), 1454 to 1484 (MRRSFKTYDKNGTGLLSVADFRKVLRQYSIN), and 1485 to 1516 (LSEEEFFHVLEYYDKSLSSKISYNDFLRAFLQ). The interaction with AR stretch occupies residues 1422–1516 (NADKMKEAGM…YNDFLRAFLQ (95 aa)). Ca(2+) is bound by residues Asp-1462, Asn-1464, Thr-1466, and Asp-1473.

As to quaternary structure, microtubule inner protein component of sperm flagellar doublet microtubules. Binds PARK7. Part of a ternary complex containing PARK7, EFCAB6/DJBP and AR.

It is found in the nucleus. Its subcellular location is the cytoplasm. The protein resides in the cytoskeleton. It localises to the flagellum axoneme. Its function is as follows. Negatively regulates the androgen receptor by recruiting histone deacetylase complex, and protein DJ-1 antagonizes this inhibition by abrogation of this complex. Microtubule inner protein (MIP) part of the dynein-decorated doublet microtubules (DMTs) in cilia axoneme, which is required for motile cilia beating. The polypeptide is EF-hand calcium-binding domain-containing protein 6 (Efcab6) (Mus musculus (Mouse)).